We begin with the raw amino-acid sequence, 262 residues long: Probable aminoglycoside 3'-phosphotransferase (262 aa).

Residue aspartate 187 is the Proton acceptor of the active site.

The protein belongs to the aminoglycoside phosphotransferase family.

It carries out the reaction kanamycin A + ATP = kanamycin 3'-phosphate + ADP + H(+). This Lactococcus lactis subsp. lactis (strain IL1403) (Streptococcus lactis) protein is Probable aminoglycoside 3'-phosphotransferase (ymdC).